Here is a 629-residue protein sequence, read N- to C-terminus: Polyadenylate-binding protein, cytoplasmic and nuclear (629 aa).

A disordered region spans residues methionine 1–serine 47. Over residues glycine 26–glutamine 42 the composition is skewed to basic and acidic residues. RRM domains follow at residues alanine 46 to arginine 124, glycine 134 to proline 211, threonine 227 to lysine 304, and valine 330 to arginine 407. The segment at glycine 465–alanine 543 is disordered. 2 stretches are compositionally biased toward low complexity: residues methionine 493–phenylalanine 506 and glycine 514–glycine 531. A PABC domain is found at valine 542 to asparagine 624.

The protein belongs to the polyadenylate-binding protein type-1 family.

Its subcellular location is the cytoplasm. It localises to the nucleus. Functionally, binds the poly(A) tail of mRNA. Appears to be an important mediator of the multiple roles of the poly(A) tail in mRNA biogenesis, stability and translation. In the nucleus, involved in both mRNA cleavage and polyadenylation. Is also required for efficient mRNA export to the cytoplasm. Acts in concert with a poly(A)-specific nuclease (PAN) to affect poly(A) tail shortening, which may occur concomitantly with either nucleocytoplasmic mRNA transport or translational initiation. In the cytoplasm, stimulates translation initiation and regulates mRNA decay through translation termination-coupled poly(A) shortening, probably mediated by PAN. The polypeptide is Polyadenylate-binding protein, cytoplasmic and nuclear (PAB1) (Yarrowia lipolytica (strain CLIB 122 / E 150) (Yeast)).